A 299-amino-acid chain; its full sequence is Probable alpha-L-glutamate ligase (299 aa).

The 183-residue stretch at 112–294 folds into the ATP-grasp domain; that stretch reads LQLLTEQGIA…IALQMIVHIE (183 aa). ATP is bound by residues lysine 148, 185–186, aspartate 194, and 218–220; these read DF and RAN. The Mg(2+) site is built by aspartate 255, glutamate 267, and asparagine 269. Aspartate 255, glutamate 267, and asparagine 269 together coordinate Mn(2+).

This sequence belongs to the RimK family. It depends on Mg(2+) as a cofactor. Requires Mn(2+) as cofactor.

The sequence is that of Probable alpha-L-glutamate ligase from Histophilus somni (strain 129Pt) (Haemophilus somnus).